A 717-amino-acid chain; its full sequence is Translation initiation factor eIF2B subunit epsilon (717 aa).

Positions 1–14 are enriched in low complexity; that stretch reads MAATAAVPGAAAGR. The disordered stretch occupies residues 1-37; sequence MAATAAVPGAAAGRASKRGGGGSGGGGTQGAEEEPPP. Arg-18 carries the post-translational modification Omega-N-methylarginine. Residues 18-29 show a composition bias toward gly residues; sequence RGGGGSGGGGTQ. Ser-23 bears the Phosphoserine mark. Glycyl lysine isopeptide (Lys-Gly) (interchain with G-Cter in ubiquitin) cross-links involve residues Lys-57 and Lys-99. The residue at position 126 (Ser-126) is a Phosphoserine. Residues Lys-137 and Lys-213 each participate in a glycyl lysine isopeptide (Lys-Gly) (interchain with G-Cter in ubiquitin) cross-link. A Phosphothreonine modification is found at Thr-318. Positions 442–479 are disordered; the sequence is GSVISLHPPDAEEDEDDGQFSDDSGADQEKEKVKLKGY. A phosphoserine mark is found at Ser-446, Ser-462, and Ser-465. Positions 452 to 467 are enriched in acidic residues; it reads AEEDEDDGQFSDDSGA. A Glycyl lysine isopeptide (Lys-Gly) (interchain with G-Cter in ubiquitin) cross-link involves residue Lys-501. The tract at residues 517–538 is disordered; sequence TEEESETESEGSVDPEELDSRA. The segment covering 519–533 has biased composition (acidic residues); sequence EESETESEGSVDPEE. 2 positions are modified to phosphoserine: Ser-528 and Ser-536. Positions 539–716 constitute a W2 domain; sequence GSPQLDDIRV…REAEEESSED (178 aa). Residue Ser-540 is modified to Phosphoserine; by DYRK2. Ser-713 carries the post-translational modification Phosphoserine.

It belongs to the eIF-2B gamma/epsilon subunits family. As to quaternary structure, component of the translation initiation factor 2B (eIF2B) complex which is a heterodecamer of two sets of five different subunits: alpha, beta, gamma, delta and epsilon. Subunits alpha, beta and delta comprise a regulatory subcomplex and subunits epsilon and gamma comprise a catalytic subcomplex. Within the complex, the hexameric regulatory complex resides at the center, with the two heterodimeric catalytic subcomplexes bound on opposite sides. In terms of processing, phosphorylated at Ser-540 by DYRK2; this is required for subsequent phosphorylation by GSK3B. Phosphorylated on serine and threonine residues by GSK3B; phosphorylation inhibits its function. Polyubiquitinated, probably by NEDD4.

Its subcellular location is the cytoplasm. It is found in the cytosol. With respect to regulation, activated by the chemical integrated stress response (ISR) inhibitor ISRIB which stimulates guanine nucleotide exchange factor activity for both phosphorylated and unphosphorylated eIF2. Its function is as follows. Acts as a component of the translation initiation factor 2B (eIF2B) complex, which catalyzes the exchange of GDP for GTP on eukaryotic initiation factor 2 (eIF2) gamma subunit. Its guanine nucleotide exchange factor activity is repressed when bound to eIF2 complex phosphorylated on the alpha subunit, thereby limiting the amount of methionyl-initiator methionine tRNA available to the ribosome and consequently global translation is repressed. This is Translation initiation factor eIF2B subunit epsilon (Eif2b5) from Mus musculus (Mouse).